The primary structure comprises 532 residues: Probable G-protein coupled receptor Mth-like 11 (532 aa).

The signal sequence occupies residues 1-20; that stretch reads MGMFRVEYLLLGILVIGVRS. Topologically, residues 21–229 are extracellular; it reads RDIPNCDFFD…VRKSRLSNAS (209 aa). Disulfide bonds link Cys26-Cys80, Cys82-Cys87, Cys91-Cys184, Cys92-Cys103, and Cys145-Cys204. N-linked (GlcNAc...) asparagine glycosylation occurs at Asn42. Asn110, Asn123, Asn166, Asn195, and Asn227 each carry an N-linked (GlcNAc...) asparagine glycan. A helical membrane pass occupies residues 230-250; the sequence is IPVKFSSVFFMVITIAAYLWL. Residues 251–262 are Cytoplasmic-facing; that stretch reads PKFRSLHGKCCN. A helical membrane pass occupies residues 263–283; it reads LYFICLAITFLLNVISLFGIF. Residues 284 to 290 are Extracellular-facing; sequence ELKTPIC. A helical membrane pass occupies residues 291–311; that stretch reads YLTGYAGYFTVMATFLWLSVI. Residues 312–339 lie on the Cytoplasmic side of the membrane; sequence SFDVWRRFAMRKFQVFYKNKRSSFFNYN. The chain crosses the membrane as a helical span at residues 340 to 360; sequence IIVWSSAGLLTCIIFLVDQFV. Residues 361–386 lie on the Extracellular side of the membrane; that stretch reads ETNLDNPYNPAVGVFSCWIFTNGWSA. Residues 387–407 traverse the membrane as a helical segment; that stretch reads TFYFYAPLAILIILNCASFFL. Topologically, residues 408-439 are cytoplasmic; sequence TTRYIYVENKQNQKVLNNSEPQKLSRNHANYR. Residues 440-460 traverse the membrane as a helical segment; the sequence is IYFRLFIIMGGSWFLEIIAFI. Residues 461 to 469 are Extracellular-facing; that stretch reads CEMENMWKP. A helical transmembrane segment spans residues 470 to 490; that stretch reads LIILNDYINCSQGIIIFVATF. Over 491-532 the chain is Cytoplasmic; that stretch reads CNHEMFRLIRKRIQNRNITSLELTNTSRPVESEKMADVELGK.

It belongs to the G-protein coupled receptor 2 family. Mth subfamily.

The protein localises to the cell membrane. This is Probable G-protein coupled receptor Mth-like 11 (mthl11) from Drosophila melanogaster (Fruit fly).